The chain runs to 25 residues: Snake venom metalloproteinase catroxase (25 aa).

Glutamate 9 lines the Ca(2+) pocket.

Belongs to the venom metalloproteinase (M12B) family. In terms of assembly, monomer. It depends on Zn(2+) as a cofactor. In terms of tissue distribution, expressed by the venom gland.

It is found in the secreted. With respect to regulation, inhibited by EDTA, beta-mercaptoethanol, but not by PMSF, p-tosyl-L-phenylalanine chloromethyl ketone, p-tosyl-L-lysine chloromethyl ketone, soybean trypsin inhibitor and aprotinin. In terms of biological role, metalloprotease that is highly active against alpha-(FGA) and beta-chains (FGB) of fibrinogen molecules. The sequence is that of Snake venom metalloproteinase catroxase from Crotalus atrox (Western diamondback rattlesnake).